The primary structure comprises 43 residues: METATLVAISISGLLVSFTGYALYTAFGQPSEQLRDPFEEHGD.

Residues 5-27 form a helical membrane-spanning segment; the sequence is TLVAISISGLLVSFTGYALYTAF.

It belongs to the PsbN family.

The protein localises to the plastid. It localises to the chloroplast thylakoid membrane. In terms of biological role, may play a role in photosystem I and II biogenesis. The protein is Protein PsbN of Houttuynia cordata (Chameleon plant).